The chain runs to 432 residues: Glutamate-1-semialdehyde 2,1-aminomutase (432 aa).

An N6-(pyridoxal phosphate)lysine modification is found at Lys-270.

It belongs to the class-III pyridoxal-phosphate-dependent aminotransferase family. HemL subfamily. In terms of assembly, homodimer. It depends on pyridoxal 5'-phosphate as a cofactor.

The protein localises to the cytoplasm. It catalyses the reaction (S)-4-amino-5-oxopentanoate = 5-aminolevulinate. The protein operates within porphyrin-containing compound metabolism; protoporphyrin-IX biosynthesis; 5-aminolevulinate from L-glutamyl-tRNA(Glu): step 2/2. The polypeptide is Glutamate-1-semialdehyde 2,1-aminomutase (Acinetobacter baylyi (strain ATCC 33305 / BD413 / ADP1)).